Here is a 448-residue protein sequence, read N- to C-terminus: Probable D-serine dehydratase (448 aa).

Residue Lys119 is modified to N6-(pyridoxal phosphate)lysine.

Belongs to the serine/threonine dehydratase family. DsdA subfamily. Pyridoxal 5'-phosphate serves as cofactor.

The catalysed reaction is D-serine = pyruvate + NH4(+). The protein is Probable D-serine dehydratase of Pseudomonas aeruginosa (strain UCBPP-PA14).